Here is a 603-residue protein sequence, read N- to C-terminus: NADH-ubiquinone oxidoreductase chain 5 (603 aa).

Transmembrane regions (helical) follow at residues 4 to 24 (YATM…GALI), 38 to 58 (SIIA…MCLD), 87 to 107 (MTFI…SLWY), 122 to 142 (LIFL…QLFI), 144 to 160 (WEGV…WWYA), 171 to 191 (AILY…WFLL), 211 to 233 (TPLL…HPWL), 241 to 261 (TPVS…FLLI), 272 to 292 (LIQT…AVCA), 301 to 320 (IVAF…IGIN), 325 to 347 (AFLH…GSII), 370 to 390 (STSL…TGFY), 405 to 422 (NAWA…TSAY), 457 to 477 (LTIG…PMST), 482 to 502 (IPLY…LTAL), and 582 to 602 (GMIK…LLLI).

The protein belongs to the complex I subunit 5 family. Core subunit of respiratory chain NADH dehydrogenase (Complex I) which is composed of 45 different subunits.

It is found in the mitochondrion inner membrane. The enzyme catalyses a ubiquinone + NADH + 5 H(+)(in) = a ubiquinol + NAD(+) + 4 H(+)(out). In terms of biological role, core subunit of the mitochondrial membrane respiratory chain NADH dehydrogenase (Complex I) which catalyzes electron transfer from NADH through the respiratory chain, using ubiquinone as an electron acceptor. Essential for the catalytic activity and assembly of complex I. The protein is NADH-ubiquinone oxidoreductase chain 5 (MT-ND5) of Pan troglodytes (Chimpanzee).